A 276-amino-acid polypeptide reads, in one-letter code: Ribonuclease 3 (276 aa).

Residues 30–161 (LTAFIRSLFK…LTGAIYLDRG (132 aa)) form the RNase III domain. Glutamate 74 lines the Mg(2+) pocket. Residue aspartate 78 is part of the active site. Residues aspartate 147 and glutamate 150 each contribute to the Mg(2+) site. Glutamate 150 is a catalytic residue. The 70-residue stretch at 188-257 (NHKSRLIEHT…AEEAMGALER (70 aa)) folds into the DRBM domain.

Belongs to the ribonuclease III family. Homodimer. The cofactor is Mg(2+).

The protein localises to the cytoplasm. The enzyme catalyses Endonucleolytic cleavage to 5'-phosphomonoester.. Its function is as follows. Digests double-stranded RNA. Involved in the processing of primary rRNA transcript to yield the immediate precursors to the large and small rRNAs (23S and 16S). Processes some mRNAs, and tRNAs when they are encoded in the rRNA operon. Processes pre-crRNA and tracrRNA of type II CRISPR loci if present in the organism. This is Ribonuclease 3 from Chlorobium luteolum (strain DSM 273 / BCRC 81028 / 2530) (Pelodictyon luteolum).